The sequence spans 349 residues: Divinyl chlorophyll a/b light-harvesting protein PcbB (349 aa).

Transmembrane regions (helical) follow at residues 27-47 (FIAA…AATL), 57-77 (LPMG…GIGF), 91-113 (IAIL…SVYF), 201-221 (VMGG…FHIA), 241-261 (AILS…AFWA), and 306-326 (LVNV…WHAL).

This sequence belongs to the PsbB/PsbC family. IsiA/Pcb subfamily. As to quaternary structure, the antenna complex consists of divinyl chlorophylls (a and b) and divinyl chlorophyll a/b binding proteins and binds more divinyl chlorophyll b than does the antenna complex from high-light-adapted Prochlorococcus. Divinyl chlorophyll a serves as cofactor. Divinyl chlorophyll b is required as a cofactor.

It localises to the cellular thylakoid membrane. Its function is as follows. The antenna complex functions as a light receptor, it captures and delivers excitation energy to photosystems II and I. The Prochlorales pcb genes are not related to higher plant LHCs. The sequence is that of Divinyl chlorophyll a/b light-harvesting protein PcbB (pcbB) from Prochlorococcus marinus (strain SARG / CCMP1375 / SS120).